The chain runs to 124 residues: Small ribosomal subunit protein uS12 (124 aa).

D89 is modified (3-methylthioaspartic acid). The disordered stretch occupies residues Q105–S124. Residues K108–G118 show a composition bias toward basic residues.

The protein belongs to the universal ribosomal protein uS12 family. In terms of assembly, part of the 30S ribosomal subunit. Contacts proteins S8 and S17. May interact with IF1 in the 30S initiation complex.

Its function is as follows. With S4 and S5 plays an important role in translational accuracy. In terms of biological role, interacts with and stabilizes bases of the 16S rRNA that are involved in tRNA selection in the A site and with the mRNA backbone. Located at the interface of the 30S and 50S subunits, it traverses the body of the 30S subunit contacting proteins on the other side and probably holding the rRNA structure together. The combined cluster of proteins S8, S12 and S17 appears to hold together the shoulder and platform of the 30S subunit. This is Small ribosomal subunit protein uS12 (rpsL) from Mycolicibacterium smegmatis (strain ATCC 700084 / mc(2)155) (Mycobacterium smegmatis).